The following is a 619-amino-acid chain: Chaperone protein HscA homolog (619 aa).

The protein belongs to the heat shock protein 70 family.

Chaperone involved in the maturation of iron-sulfur cluster-containing proteins. Has a low intrinsic ATPase activity which is markedly stimulated by HscB. The protein is Chaperone protein HscA homolog of Azotobacter vinelandii.